We begin with the raw amino-acid sequence, 350 residues long: Ketol-acid reductoisomerase (NADP(+)) (350 aa).

One can recognise a KARI N-terminal Rossmann domain in the interval 3 to 183 (AQIWYEDDGD…GALRAGAIKT (181 aa)). Residues 26–29 (YGSQ), Arg-49, Ser-52, Ser-54, and 84–87 (DQYQ) contribute to the NADP(+) site. Residue His-109 is part of the active site. Gly-135 contributes to the NADP(+) binding site. In terms of domain architecture, KARI C-terminal knotted spans 184 to 327 (TFKEETETDL…PKLRAMFSWN (144 aa)). Mg(2+) contacts are provided by Asp-192, Glu-196, Glu-228, and Glu-232. Position 253 (Ser-253) interacts with substrate.

It belongs to the ketol-acid reductoisomerase family. It depends on Mg(2+) as a cofactor.

The catalysed reaction is (2R)-2,3-dihydroxy-3-methylbutanoate + NADP(+) = (2S)-2-acetolactate + NADPH + H(+). It catalyses the reaction (2R,3R)-2,3-dihydroxy-3-methylpentanoate + NADP(+) = (S)-2-ethyl-2-hydroxy-3-oxobutanoate + NADPH + H(+). It functions in the pathway amino-acid biosynthesis; L-isoleucine biosynthesis; L-isoleucine from 2-oxobutanoate: step 2/4. Its pathway is amino-acid biosynthesis; L-valine biosynthesis; L-valine from pyruvate: step 2/4. Involved in the biosynthesis of branched-chain amino acids (BCAA). Catalyzes an alkyl-migration followed by a ketol-acid reduction of (S)-2-acetolactate (S2AL) to yield (R)-2,3-dihydroxy-isovalerate. In the isomerase reaction, S2AL is rearranged via a Mg-dependent methyl migration to produce 3-hydroxy-3-methyl-2-ketobutyrate (HMKB). In the reductase reaction, this 2-ketoacid undergoes a metal-dependent reduction by NADPH to yield (R)-2,3-dihydroxy-isovalerate. This chain is Ketol-acid reductoisomerase (NADP(+)), found in Bifidobacterium animalis subsp. lactis (strain AD011).